Here is a 114-residue protein sequence, read N- to C-terminus: UPF0342 protein lp_1415 (114 aa).

Belongs to the UPF0342 family.

The protein is UPF0342 protein lp_1415 of Lactiplantibacillus plantarum (strain ATCC BAA-793 / NCIMB 8826 / WCFS1) (Lactobacillus plantarum).